A 166-amino-acid chain; its full sequence is Tetranectin-like protein (166 aa).

3 cysteine pairs are disulfide-bonded: C37–C47, C64–C160, and C136–C152. A C-type lectin domain is found at I43–E161.

The sequence is that of Tetranectin-like protein from Carcharhinus perezii (Reef shark).